The chain runs to 156 residues: Peptidyl-prolyl cis-trans isomerase cypE (156 aa).

The PPIase cyclophilin-type domain maps to threonine 2–alanine 155.

The protein belongs to the cyclophilin-type PPIase family. Interacts with snwA.

The protein resides in the cytoplasm. Its subcellular location is the nucleus. It carries out the reaction [protein]-peptidylproline (omega=180) = [protein]-peptidylproline (omega=0). Its function is as follows. Catalyzes the cis-trans isomerization of proline imidic peptide bonds in oligopeptides. Plays a role in protein folding, transport and assembly. This is Peptidyl-prolyl cis-trans isomerase cypE (cypE) from Dictyostelium discoideum (Social amoeba).